A 147-amino-acid chain; its full sequence is Hemoglobin subunit beta (147 aa).

At Val-2 the chain carries N-acetylvaline. Residues 3 to 147 form the Globin domain; sequence HLSAEEKGHI…VATALAHKYH (145 aa). The residue at position 60 (Lys-60) is an N6-acetyllysine. His-64 contacts heme b. At Lys-83 the chain carries N6-acetyllysine. His-93 contributes to the heme b binding site. Cys-94 carries the post-translational modification S-nitrosocysteine. N6-acetyllysine is present on Lys-145.

The protein belongs to the globin family. In terms of assembly, heterotetramer of two alpha chains and two beta chains. Red blood cells.

Its function is as follows. Involved in oxygen transport from the lung to the various peripheral tissues. This is Hemoglobin subunit beta (HBB) from Sminthopsis crassicaudata (Fat-tailed dunnart).